Consider the following 223-residue polypeptide: Ribonuclease 3 (223 aa).

The 123-residue stretch at 5-127 (LQRLEKKIGY…IIGAIYLDSD (123 aa)) folds into the RNase III domain. Glutamate 40 provides a ligand contact to Mg(2+). Aspartate 44 is an active-site residue. Residues aspartate 113 and glutamate 116 each coordinate Mg(2+). The active site involves glutamate 116. The DRBM domain occupies 154–223 (DPKTRLQEYL…AADIALGQLN (70 aa)).

The protein belongs to the ribonuclease III family. In terms of assembly, homodimer. The cofactor is Mg(2+).

The protein localises to the cytoplasm. It catalyses the reaction Endonucleolytic cleavage to 5'-phosphomonoester.. In terms of biological role, digests double-stranded RNA. Involved in the processing of primary rRNA transcript to yield the immediate precursors to the large and small rRNAs (23S and 16S). Processes some mRNAs, and tRNAs when they are encoded in the rRNA operon. Processes pre-crRNA and tracrRNA of type II CRISPR loci if present in the organism. This Aliivibrio fischeri (strain ATCC 700601 / ES114) (Vibrio fischeri) protein is Ribonuclease 3.